Reading from the N-terminus, the 928-residue chain is Outer membrane protein SlpA (928 aa).

The first 23 residues, 1 to 23 (MKKRLVTLLAGLLTVLSMGFGLA), serve as a signal peptide directing secretion. The region spanning 24–84 (QFSDVPAGHW…QQIEEELKTQ (61 aa)) is the SLH domain.

In terms of assembly, homotrimer.

Its subcellular location is the cell outer membrane. In terms of biological role, plays an important role in the structural organization and integrity of the cell envelope, bridging the outer membrane to the peptidoglyan layer. Appears to be a nonselective channel. In Thermus thermophilus (strain ATCC 27634 / DSM 579 / HB8), this protein is Outer membrane protein SlpA (slpA).